We begin with the raw amino-acid sequence, 252 residues long: Probable anguibactin biosynthesis thioesterase AngT (252 aa).

Residues Ser-92 and His-229 contribute to the active site.

It belongs to the thioesterase family.

It participates in siderophore biosynthesis; anguibactin biosynthesis. In terms of biological role, probable thioesterase. Involved in anguibactin production, but is not essential for virulence or iron transport gene expression. The protein is Probable anguibactin biosynthesis thioesterase AngT (angT) of Vibrio anguillarum (strain ATCC 68554 / 775) (Listonella anguillarum).